The chain runs to 300 residues: Cation-efflux pump FieF (300 aa).

Transmembrane regions (helical) follow at residues 11–31 (LAAV…VFAW), 40–60 (LASL…LLVV), 81–101 (LAAL…ILTG), and 114–134 (PEVG…LVSF). Zn(2+) contacts are provided by aspartate 45 and aspartate 49. Positions 153 and 157 each coordinate Zn(2+). The next 2 membrane-spanning stretches (helical) occupy residues 156–176 (SDLL…KGIT) and 182–202 (FALG…YDAV).

It belongs to the cation diffusion facilitator (CDF) transporter (TC 2.A.4) family. FieF subfamily. As to quaternary structure, homodimer.

The protein resides in the cell inner membrane. It catalyses the reaction Zn(2+)(in) + H(+)(out) = Zn(2+)(out) + H(+)(in). It carries out the reaction Cd(2+)(in) + H(+)(out) = Cd(2+)(out) + H(+)(in). The enzyme catalyses Fe(2+)(in) + H(+)(out) = Fe(2+)(out) + H(+)(in). Divalent metal cation transporter which exports Zn(2+), Cd(2+) and possibly Fe(2+). May be involved in zinc and iron detoxification by efflux. The polypeptide is Cation-efflux pump FieF (Pectobacterium carotovorum subsp. carotovorum (strain PC1)).